A 217-amino-acid polypeptide reads, in one-letter code: Probable transaldolase (217 aa).

Residue lysine 83 is the Schiff-base intermediate with substrate of the active site.

This sequence belongs to the transaldolase family. Type 3B subfamily.

Its subcellular location is the cytoplasm. The catalysed reaction is D-sedoheptulose 7-phosphate + D-glyceraldehyde 3-phosphate = D-erythrose 4-phosphate + beta-D-fructose 6-phosphate. Its pathway is carbohydrate degradation; pentose phosphate pathway; D-glyceraldehyde 3-phosphate and beta-D-fructose 6-phosphate from D-ribose 5-phosphate and D-xylulose 5-phosphate (non-oxidative stage): step 2/3. In terms of biological role, transaldolase is important for the balance of metabolites in the pentose-phosphate pathway. The polypeptide is Probable transaldolase (Clostridium botulinum (strain Hall / ATCC 3502 / NCTC 13319 / Type A)).